Reading from the N-terminus, the 144-residue chain is Cystatin-F (144 aa).

Positions 1 to 18 (MWLAILLALCCLTSDTHG) are cleaved as a signal peptide. An N-linked (GlcNAc...) asparagine glycan is attached at Asn61. Residues 80–84 (QVVKG) carry the Secondary area of contact motif. 2 cysteine pairs are disulfide-bonded: Cys98/Cys109 and Cys123/Cys143.

It belongs to the cystatin family.

The protein localises to the secreted. Inhibits papain and cathepsin L but with affinities lower than other cystatins. May play a role in immune regulation through inhibition of a unique target in the hematopoietic system. This is Cystatin-F (Cst7) from Mus musculus (Mouse).